Reading from the N-terminus, the 1592-residue chain is Autophagy-related protein 2 (1592 aa).

Ser236 is subject to Phosphoserine. The interval 264 to 286 is disordered; it reads AMEEQSNEDPSEPQVTQEEQEND.

Belongs to the ATG2 family.

It is found in the preautophagosomal structure membrane. Its subcellular location is the endoplasmic reticulum membrane. It catalyses the reaction a 1,2-diacyl-sn-glycero-3-phosphocholine(in) = a 1,2-diacyl-sn-glycero-3-phosphocholine(out). It carries out the reaction a 1,2-diacyl-sn-glycero-3-phospho-L-serine(in) = a 1,2-diacyl-sn-glycero-3-phospho-L-serine(out). The enzyme catalyses a 1,2-diacyl-sn-glycero-3-phosphoethanolamine(in) = a 1,2-diacyl-sn-glycero-3-phosphoethanolamine(out). Its function is as follows. Lipid transfer protein required for autophagosome completion and peroxisome degradation. Tethers the edge of the isolation membrane (IM) to the endoplasmic reticulum (ER) and mediates direct lipid transfer from ER to IM for IM expansion. ATG2 binds to the ER exit site (ERES), which is the membrane source for autophagosome formation, using basic residues in its N-terminal region (NR) and to the expanding edge of the IM through its C-terminal region. The latter binding is assisted by an ATG18-PtdIns3P interaction. ATG2 then extracts phospholipids from the membrane source using its NR and transfers them to ATG9 to the IM through its predicted beta-sheet-rich structure for membrane expansion. In Saccharomyces cerevisiae (strain YJM789) (Baker's yeast), this protein is Autophagy-related protein 2 (ATG2).